A 544-amino-acid chain; its full sequence is Lipid II flippase MurJ (544 aa).

The next 14 membrane-spanning stretches (helical) occupy residues 21–41 (ILGM…GGAL), 49–69 (YTLF…KFVS), 90–110 (VMLV…PMFA), 127–147 (VVYV…MSLV), 169–189 (IVRI…FNGG), 191–211 (VIAV…GLVV), 241–261 (MFFE…AIPL), 297–317 (LVMI…PTIT), 338–358 (TILF…GPTY), 375–395 (ILLW…NAAI), 404–424 (FAVV…VPLI), 431–451 (GAIL…FIMI), 471–491 (VLSA…GFFI), and 500–520 (AAIV…YCGY).

The protein belongs to the polysaccharide synthase family.

The protein resides in the cell membrane. It participates in cell wall biogenesis; peptidoglycan biosynthesis. In terms of biological role, involved in peptidoglycan biosynthesis. Transports lipid-linked peptidoglycan precursors from the inner to the outer leaflet of the cytoplasmic membrane. Not essential for growth. This chain is Lipid II flippase MurJ, found in Bacillus subtilis (strain 168).